A 482-amino-acid polypeptide reads, in one-letter code: Bifunctional protein HldE (482 aa).

A ribokinase region spans residues 1-322; that stretch reads MFGLESKSPK…QYIHTQPSNL (322 aa). 198–201 contributes to the ATP binding site; that stretch reads NKKE. Residue D267 is part of the active site. A cytidylyltransferase region spans residues 350-482; the sequence is FTNGCFDILH…IQRSKICKHS (133 aa).

The protein in the N-terminal section; belongs to the carbohydrate kinase PfkB family. In the C-terminal section; belongs to the cytidylyltransferase family. Homodimer.

The catalysed reaction is D-glycero-beta-D-manno-heptose 7-phosphate + ATP = D-glycero-beta-D-manno-heptose 1,7-bisphosphate + ADP + H(+). It carries out the reaction D-glycero-beta-D-manno-heptose 1-phosphate + ATP + H(+) = ADP-D-glycero-beta-D-manno-heptose + diphosphate. It participates in nucleotide-sugar biosynthesis; ADP-L-glycero-beta-D-manno-heptose biosynthesis; ADP-L-glycero-beta-D-manno-heptose from D-glycero-beta-D-manno-heptose 7-phosphate: step 1/4. The protein operates within nucleotide-sugar biosynthesis; ADP-L-glycero-beta-D-manno-heptose biosynthesis; ADP-L-glycero-beta-D-manno-heptose from D-glycero-beta-D-manno-heptose 7-phosphate: step 3/4. It functions in the pathway bacterial outer membrane biogenesis; LPS core biosynthesis. Its function is as follows. Catalyzes the phosphorylation of D-glycero-D-manno-heptose 7-phosphate at the C-1 position to selectively form D-glycero-beta-D-manno-heptose-1,7-bisphosphate. In terms of biological role, catalyzes the ADP transfer from ATP to D-glycero-beta-D-manno-heptose 1-phosphate, yielding ADP-D-glycero-beta-D-manno-heptose. This chain is Bifunctional protein HldE, found in Helicobacter hepaticus (strain ATCC 51449 / 3B1).